Consider the following 689-residue polypeptide: MARVFPLERTRNIGIMAHIDAGKTTTTERILFYTGRVHRIGEVDDGAATMDWMVQEQERGITITSAATTCYWRDYRINIIDTPGHVDFTVEVERSLRVLDGAIAVFDAVAGVEPQSETVWRQADKYRVPRIVYLNKMDRVGADFFKSMQSIKTKLGSDPVAVQIPLGAEDRFVGMIDLVTRKAFIYTDDLGTKIKEIPIPADLTGVVAEYREKLLEMVAETDEELMIKYLNGEELTVEDIKIGIRKATLAVKKFPVLCGSSYRNKGVQPLLDAVVDYLPAPTDVPAVCGIDQRTGREDRRVARDDEPFSALAFKVMVDPYVGKLTFFRVYSGTVNSGSHVYNSTKQKKERIGRLLQMHANHREEIEAAHAGDIIGAVGLKFTSTGDTLSDEEHPIILEAMEFPEPVISIAIEPKTKGDQDKMGVALQRLAEEDPTFKIQSNEETGQTLISGMGELHLEIIVDRLLREFKVQANIGRPQVAYKETIKGIAQAEGRFIRQTGGRGQYGHVVIVVEPLDRGKGFAFSNQIVGGVVPKEFIPAVETGVREALTSGVLFGYPVADVKVSLVDGSYHPVDSSEVAFKIAASMAVKKAVANASPVLLEPIMRVEVVLPEDYVGDVISDLNSRRGHITQMEHQGKTQIVRADVPLAEMFGYATELRSRTQGRGNHTMQFDHYAEVPQNIADKMIRKY.

Positions 8 to 282 (ERTRNIGIMA…AVVDYLPAPT (275 aa)) constitute a tr-type G domain. Residues 17–24 (AHIDAGKT), 81–85 (DTPGH), and 135–138 (NKMD) each bind GTP.

This sequence belongs to the TRAFAC class translation factor GTPase superfamily. Classic translation factor GTPase family. EF-G/EF-2 subfamily.

It is found in the cytoplasm. Functionally, catalyzes the GTP-dependent ribosomal translocation step during translation elongation. During this step, the ribosome changes from the pre-translocational (PRE) to the post-translocational (POST) state as the newly formed A-site-bound peptidyl-tRNA and P-site-bound deacylated tRNA move to the P and E sites, respectively. Catalyzes the coordinated movement of the two tRNA molecules, the mRNA and conformational changes in the ribosome. This Desulforudis audaxviator (strain MP104C) protein is Elongation factor G.